A 159-amino-acid polypeptide reads, in one-letter code: Protein-export protein SecB (159 aa).

It belongs to the SecB family. Homotetramer, a dimer of dimers. One homotetramer interacts with 1 SecA dimer.

The protein localises to the cytoplasm. One of the proteins required for the normal export of preproteins out of the cell cytoplasm. It is a molecular chaperone that binds to a subset of precursor proteins, maintaining them in a translocation-competent state. It also specifically binds to its receptor SecA. The polypeptide is Protein-export protein SecB (Rhizobium etli (strain CIAT 652)).